The primary structure comprises 1063 residues: Retinoblastoma-like protein 1 (1063 aa).

A phosphothreonine mark is found at Thr332, Thr369, and Thr385. A domain A region spans residues 383 to 584; the sequence is VTTPVASATQ…WEALHASANR (202 aa). The interval 383–944 is pocket; binds T and E1A; it reads VTTPVASATQ…GRVKSFALKY (562 aa). Residues 585-779 are spacer; that stretch reads VPSCEEVIFP…AQDAHLTGVS (195 aa). Phosphoserine is present on residues Ser640, Ser650, Ser748, and Ser761. The domain B stretch occupies residues 780-944; that stretch reads KPKRTGSLAL…GRVKSFALKY (165 aa). Phosphoserine occurs at positions 959, 970, and 983. Thr992 is modified (phosphothreonine). Ser1004 and Ser1036 each carry phosphoserine.

The protein belongs to the retinoblastoma protein (RB) family. As to quaternary structure, component of the DREAM complex (also named LINC complex) at least composed of E2F4, E2F5, LIN9, LIN37, LIN52, LIN54, MYBL1, MYBL2, RBL1, RBL2, RBBP4, TFDP1 and TFDP2. The complex exists in quiescent cells where it represses cell cycle-dependent genes. It dissociates in S phase when LIN9, LIN37, LIN52 and LIN54 form a subcomplex that binds to MYBL2. Interacts with AATF. Interacts with KDM5A. Interacts with KMT5B and KMT5C. Interacts with USP4. Interacts with RBBP9. Post-translationally, cell-cycle arrest properties are inactivated by phosphorylation on Thr-332, Ser-640, Ser-959 and Ser-970 by CDK4. Highly expressed in fetal heart and liver. Expressed at low levels in all other fetal tissues except skeletal muscle. High levels in neonatal spleen and thymus with low levels in other tissues. In adult, highly expressed in testis. Barely detectable in other tissues.

Its subcellular location is the nucleus. Key regulator of entry into cell division. Directly involved in heterochromatin formation by maintaining overall chromatin structure and, in particular, that of constitutive heterochromatin by stabilizing histone methylation. Recruits and targets histone methyltransferases KMT5B and KMT5C, leading to epigenetic transcriptional repression. Controls histone H4 'Lys-20' trimethylation. Probably acts as a transcription repressor by recruiting chromatin-modifying enzymes to promoters. Potent inhibitor of E2F-mediated trans-activation. May act as a tumor suppressor. This chain is Retinoblastoma-like protein 1 (Rbl1), found in Mus musculus (Mouse).